Here is a 257-residue protein sequence, read N- to C-terminus: Imidazole glycerol phosphate synthase subunit HisF (257 aa).

Active-site residues include Asp12 and Asp131.

It belongs to the HisA/HisF family. In terms of assembly, heterodimer of HisH and HisF.

The protein resides in the cytoplasm. It carries out the reaction 5-[(5-phospho-1-deoxy-D-ribulos-1-ylimino)methylamino]-1-(5-phospho-beta-D-ribosyl)imidazole-4-carboxamide + L-glutamine = D-erythro-1-(imidazol-4-yl)glycerol 3-phosphate + 5-amino-1-(5-phospho-beta-D-ribosyl)imidazole-4-carboxamide + L-glutamate + H(+). The protein operates within amino-acid biosynthesis; L-histidine biosynthesis; L-histidine from 5-phospho-alpha-D-ribose 1-diphosphate: step 5/9. Its function is as follows. IGPS catalyzes the conversion of PRFAR and glutamine to IGP, AICAR and glutamate. The HisF subunit catalyzes the cyclization activity that produces IGP and AICAR from PRFAR using the ammonia provided by the HisH subunit. This is Imidazole glycerol phosphate synthase subunit HisF from Rhodococcus erythropolis (strain PR4 / NBRC 100887).